The chain runs to 76 residues: Omega-agatoxin-Aa3a (76 aa).

6 cysteine pairs are disulfide-bonded: Cys2–Cys19, Cys9–Cys25, Cys16–Cys52, Cys18–Cys40, Cys27–Cys38, and Cys59–Cys67.

This sequence belongs to the neurotoxin 04 (omega-agtx) family. 03 (type II/III omega-agtx) subfamily. In terms of tissue distribution, expressed by the venom gland.

The protein localises to the secreted. Functionally, omega-agatoxin are antagonist of voltage-gated calcium channels. They block insect neuromuscular transmission presynaptically. Potent blocker of N- (Cav2.2/CACNA1B) and L-type (Cav1/CACNA1) calcium channels. The chain is Omega-agatoxin-Aa3a from Agelenopsis aperta (North American funnel-web spider).